We begin with the raw amino-acid sequence, 424 residues long: MFDVVISDIEAREILDSRGYPTLYVKVITNTGIFGEACVPSGASTGIKEALELRDQDPKRYQGKGVLQAVANVEKVLLPALQGFSVFDQITADAIMIDADGTSNKEKLGANAILGVSLALAKAAAATLERPLYRYLGGAFSHVLPCPMMNLINGGMHATNGLQFQEFMIRPISAPSLTEAVRMGAEVFHTLKKILQNRQLSTGVGDEGGFAPQLASNSEALDLLLAAIEKAGFIPGEDISLALDCAASSFYNTQDKTYDGKSAADQVAVLTELCDRYPIDSIEDGLAEEDFEGWKLLSETLGDRIQLVGDDLFVTNSALIAEGIAQGLANAVLIKPNQIGTLTETAEAIRLATTQGYATILSHRSGETEDTTIADLAVAFNTGQIKTGSLSRSERIAKYNRLIAIEEEIGPEAVFQDSNPFSKA.

Glutamine 165 contacts (2R)-2-phosphoglycerate. Glutamate 207 (proton donor) is an active-site residue. Residues aspartate 244, glutamate 283, and aspartate 310 each contribute to the Mg(2+) site. 4 residues coordinate (2R)-2-phosphoglycerate: lysine 335, arginine 364, serine 365, and lysine 386. The active-site Proton acceptor is lysine 335.

It belongs to the enolase family. Requires Mg(2+) as cofactor.

The protein resides in the cytoplasm. It localises to the secreted. Its subcellular location is the cell surface. It carries out the reaction (2R)-2-phosphoglycerate = phosphoenolpyruvate + H2O. Its pathway is carbohydrate degradation; glycolysis; pyruvate from D-glyceraldehyde 3-phosphate: step 4/5. In terms of biological role, catalyzes the reversible conversion of 2-phosphoglycerate (2-PG) into phosphoenolpyruvate (PEP). It is essential for the degradation of carbohydrates via glycolysis. The polypeptide is Enolase (Chlamydia muridarum (strain MoPn / Nigg)).